Consider the following 501-residue polypeptide: Zinc finger and SCAN domain-containing protein 12 (501 aa).

Residues Lys20 and Lys26 each participate in a glycyl lysine isopeptide (Lys-Gly) (interchain with G-Cter in SUMO2) cross-link. The SCAN box domain maps to 51 to 132; sequence QFCYQETSGP…DLERELDELG (82 aa). The tract at residues 175 to 194 is disordered; sequence REAQEEQVSGVETGNEPRNV. Positions 180–194 are enriched in polar residues; the sequence is EQVSGVETGNEPRNV. Residue Lys197 forms a Glycyl lysine isopeptide (Lys-Gly) (interchain with G-Cter in SUMO2) linkage. Residues 223–255 form a disordered region; the sequence is EAHNPGEESSGISHEDSQPLRNENGVNSPANSE. Over residues 241–253 the composition is skewed to polar residues; the sequence is PLRNENGVNSPAN. 6 C2H2-type zinc fingers span residues 269–291, 297–319, 325–347, 353–375, 381–403, and 409–431; these read HGCD…KRVH, YKCE…KVVH, YKCN…QRLH, YHCN…LKSH, YQCL…QGVH, and YECN…QETH. Residues 429 to 450 form a disordered region; it reads ETHHKEKPFTQSGPIQQQRNHT. The segment covering 437–447 has biased composition (polar residues); sequence FTQSGPIQQQR. The C2H2-type 7 zinc-finger motif lies at 455–477; the sequence is YKCSVCGKAFIQKISLIEHEQIH. A C2H2-type 8; degenerate zinc finger spans residues 483 to 501; sequence YKCAEGGKAFIQMSELTEH.

Belongs to the krueppel C2H2-type zinc-finger protein family. As to expression, testis specific.

It is found in the nucleus. In terms of biological role, may be involved in transcriptional regulation. This Mus musculus (Mouse) protein is Zinc finger and SCAN domain-containing protein 12 (Zscan12).